A 387-amino-acid polypeptide reads, in one-letter code: 3-ketoacyl-CoA thiolase (387 aa).

Cys-91 functions as the Acyl-thioester intermediate in the catalytic mechanism. Active-site proton acceptor residues include His-343 and Cys-373.

The protein belongs to the thiolase-like superfamily. Thiolase family. In terms of assembly, heterotetramer of two alpha chains (FadB) and two beta chains (FadA).

The protein resides in the cytoplasm. The enzyme catalyses an acyl-CoA + acetyl-CoA = a 3-oxoacyl-CoA + CoA. The protein operates within lipid metabolism; fatty acid beta-oxidation. Its function is as follows. Catalyzes the final step of fatty acid oxidation in which acetyl-CoA is released and the CoA ester of a fatty acid two carbons shorter is formed. This chain is 3-ketoacyl-CoA thiolase, found in Salmonella paratyphi A (strain ATCC 9150 / SARB42).